Reading from the N-terminus, the 143-residue chain is Hemoglobin cathodic subunit alpha (143 aa).

An N-acetylserine modification is found at Ser1. The 143-residue stretch at 1–143 folds into the Globin domain; it reads SLAPGDKTVV…VCAALSDKYR (143 aa). His59 is a binding site for O2. His89 serves as a coordination point for heme b.

Belongs to the globin family. Heterotetramer of two alpha chains and two beta chains. As to expression, red blood cells.

Its function is as follows. Involved in oxygen transport from gills to the various peripheral tissues. This is Hemoglobin cathodic subunit alpha from Gymnothorax unicolor (Brown moray).